Consider the following 1124-residue polypeptide: MSTTRPSQSSNNSGRSRNSARIIAQTTVDAKLHATFEESGSSFDYSSWVRVSGSVDGDQQPRSNKVTTAYLNHIQRGKQIQPFGCLLALDEKTCKVVAYSENAPEMLTMVSHAVPSVGDHPALGIGTDIRTVFTAPSASALQKALGFAEVSLLNPILVHCKTSGKPFYAIIHRVTGSLIIDFEPVKPYEVPMTAAGALQSYKLAAKAITRLQSLASGSMERLCDTMVQEVFELTGYDRVMAYKFHEDDHGEVIAEIAKPGLEPYLGLHYPATDIPQAARFLFMKNKVRMIVDCNAKHVKVLQDEKLPFDLTLCGSTLRAPHSCHLQYMANMDSIASLVMAVVVNDSDEDGDSADAVLPQKKKRLWGLVVCHNTTPRFVPFPLRYACEFLAQVFAIHVNKEIELEYQILEKNILRTQTLLCDMLMRDAPLGIVSQSPNIMDLVKCDGAALFYRNKLWLLGATPTEYQIREIALWMSEYHTDSTGLSTDSLLDAGFPGALSLSDTVCGMAAVRITSKDIVFWFRSHTAAEIRWGGAKHEPGEQDDGRKMHPRSSFKAFLEVVKARSVPWKDFEMDAIHSLQLILRNASKDTDIIDLNTKAINTRLNDLKIEGMQELEAVTSEMVRLIETATVPILAVDVDGTVNGWNIKIAELTGLPVGEAIGKHLLTLVEDSSTDIVKKMLNLALQGEEEKNVQFEIKTHGDQVEFGPISLIVNACASRDLRENVVGVCFVAQDITAQKTVMDKFTRIEGDYKAIVQNPNQLIPPIFGTDEFGWCCEWNAAMIKLTGWKREEVMDKMLLGEVFGTQMSCCRLKNQEAFVNFGIVLNKAMTGLETEKVAFGFFSRKGKYVECLLSVSKKIDAEGLVTGVFCFLQLASPELQQALHIQRLSEQTALKRLKVLTYMKRQIRNPLAGIVFSSKMLEGTDLETEQKQIVNTSSQCQRQLSKILDDSDLDGIIDGYLDLEMAEFTLHEVLVTSLSQVMNRSNTKGIRIANDVAEHIAKESLYGDSLRLQQVLADFLLISINSTPNGGQVVIASSLTKEQLGKSVHLVNLELSITHGGSGVPEAALNQMFGNNVLESEEGISLHISRKLLKLMNGDVRYLKEAGKSSFILSVELAAAHKLKG.

The segment covering 1–19 has biased composition (low complexity); that stretch reads MSTTRPSQSSNNSGRSRNS. Residues 1 to 21 are disordered; it reads MSTTRPSQSSNNSGRSRNSAR. Residues 218-401 form the GAF domain; sequence SMERLCDTMV…VFAIHVNKEI (184 aa). Cysteine 323 contacts phytochromobilin. 2 consecutive PAS domains span residues 617 to 687 and 750 to 821; these read VTSE…LQGE and DYKA…VNFG. Positions 901–1120 constitute a Histidine kinase domain; sequence YMKRQIRNPL…ILSVELAAAH (220 aa).

The protein belongs to the phytochrome family. In terms of assembly, homodimer. In terms of processing, contains one covalently linked phytochromobilin chromophore.

Functionally, regulatory photoreceptor which exists in two forms that are reversibly interconvertible by light: the Pr form that absorbs maximally in the red region of the spectrum and the Pfr form that absorbs maximally in the far-red region. Photoconversion of Pr to Pfr induces an array of morphogenic responses, whereas reconversion of Pfr to Pr cancels the induction of those responses. Pfr controls the expression of a number of nuclear genes including those encoding the small subunit of ribulose-bisphosphate carboxylase, chlorophyll A/B binding protein, protochlorophyllide reductase, rRNA, etc. It also controls the expression of its own gene(s) in a negative feedback fashion. The polypeptide is Phytochrome type A (PHYA) (Lathyrus sativus (White vetchling)).